The sequence spans 356 residues: Phosphoribosylformylglycinamidine cyclo-ligase (356 aa).

It belongs to the AIR synthase family.

The protein localises to the cytoplasm. It catalyses the reaction 2-formamido-N(1)-(5-O-phospho-beta-D-ribosyl)acetamidine + ATP = 5-amino-1-(5-phospho-beta-D-ribosyl)imidazole + ADP + phosphate + H(+). It participates in purine metabolism; IMP biosynthesis via de novo pathway; 5-amino-1-(5-phospho-D-ribosyl)imidazole from N(2)-formyl-N(1)-(5-phospho-D-ribosyl)glycinamide: step 2/2. The protein is Phosphoribosylformylglycinamidine cyclo-ligase of Rhizobium meliloti (strain 1021) (Ensifer meliloti).